Reading from the N-terminus, the 297-residue chain is 33 kDa chaperonin (297 aa).

2 disulfide bridges follow: Cys-232/Cys-234 and Cys-266/Cys-269.

Belongs to the HSP33 family. In terms of processing, under oxidizing conditions two disulfide bonds are formed involving the reactive cysteines. Under reducing conditions zinc is bound to the reactive cysteines and the protein is inactive.

Its subcellular location is the cytoplasm. Redox regulated molecular chaperone. Protects both thermally unfolding and oxidatively damaged proteins from irreversible aggregation. Plays an important role in the bacterial defense system toward oxidative stress. The sequence is that of 33 kDa chaperonin from Pseudomonas paraeruginosa (strain DSM 24068 / PA7) (Pseudomonas aeruginosa (strain PA7)).